Here is a 111-residue protein sequence, read N- to C-terminus: Large ribosomal subunit protein eL31 (111 aa).

It belongs to the eukaryotic ribosomal protein eL31 family.

The protein is Large ribosomal subunit protein eL31 (rpl31) of Dictyostelium discoideum (Social amoeba).